The sequence spans 381 residues: Cytochrome P450 105C1 (381 aa).

Cys330 is a heme binding site.

Belongs to the cytochrome P450 family. The cofactor is heme.

Its subcellular location is the cytoplasm. This is Cytochrome P450 105C1 (cyp105C1) from Streptomyces sp.